The following is a 105-amino-acid chain: Small ribosomal subunit protein uS10 (105 aa).

Belongs to the universal ribosomal protein uS10 family. Part of the 30S ribosomal subunit.

Functionally, involved in the binding of tRNA to the ribosomes. The protein is Small ribosomal subunit protein uS10 of Anaplasma phagocytophilum (strain HZ).